Reading from the N-terminus, the 524-residue chain is Tissue-resident T-cell transcription regulator protein ZNF683 (524 aa).

Residues 130–142 (NKDKLGKQPERAG) show a composition bias toward basic and acidic residues. Disordered stretches follow at residues 130–166 (NKDK…NRKS) and 265–303 (QALP…LSSQ). C2H2-type zinc fingers lie at residues 322 to 344 (YECN…LRVH) and 350 to 372 (FQCA…HLVH). The C2H2-type 3; degenerate zinc finger occupies 398-420 (REREVCHKRFSSSSNLKTHLRLH). A C2H2-type 4 zinc finger spans residues 426–448 (FQCSVCRSRFTQHIHLKLHHRLH).

It belongs to the krueppel C2H2-type zinc-finger protein family. As to expression, expressed in terminally differentiated effector CD8(+) T-cells, but not in naive and central memory cells. Expressed in terminally differentiated natural killer (NK) cells and natural killer (NKT) T-cells (at protein level). Expressed strongly in effector-type CD8(+) T-cells and weakly in naive and memory CD8(+) T-cells. Expressed in terminally differentiated natural killer (NK) cells. Isoform 2 is strongly expressed in effector CD8(+) T and natural killer (NK) cells. Isoform 1 is expressed in effector CD8(+) T and natural killer (NK) cells. In terms of tissue distribution, (Microbial infection) Expressed in cytomegalovirus (CMV)-infected effector CD8(+) T-cells (at protein level).

The protein localises to the nucleus. In terms of biological role, transcription factor that mediates a transcriptional program in various innate and adaptive immune tissue-resident lymphocyte T-cell types such as tissue-resident memory T (Trm), natural killer (trNK) and natural killer T (NKT) cells and negatively regulates gene expression of proteins that promote the egress of tissue-resident T-cell populations from non-lymphoid organs. Plays a role in the development, retention and long-term establishment of adaptive and innate tissue-resident lymphocyte T cell types in non-lymphoid organs, such as the skin and gut, but also in other nonbarrier tissues like liver and kidney, and therefore may provide immediate immunological protection against reactivating infections or viral reinfection. Also plays a role in the differentiation of both thymic and peripheral NKT cells. Negatively regulates the accumulation of interferon-gamma (IFN-gamma) in NKT cells at steady state or after antigenic stimulation. Positively regulates granzyme B production in NKT cells after innate stimulation. Associates with the transcriptional repressor PRDM1/BLIMP1 to chromatin at gene promoter regions. Functionally, lacks transcriptional repressor activity. Binds to DNA within promoter regions of the transcriptional repressor PRDM1/BLIMP1 target sites. Unable to regulate interferon-gamma (IFN-gamma) production in cytomegalovirus (CMV)-infected effector CD8(+) T-cells. Its function is as follows. Transcriptional repressor that binds to DNA within promoter regions of the transcriptional repressor PRDM1/BLIMP1 target sites. Regulates interferon-gamma (IFN-gamma) production in cytomegalovirus (CMV)-infected effector CD8(+) T cells. This chain is Tissue-resident T-cell transcription regulator protein ZNF683, found in Homo sapiens (Human).